Consider the following 195-residue polypeptide: MRRATITRKTAETDISVEIDLDGTGVYDNRTGVGFFDHMLDQLSRHALIDMTVRCDGDLHIDDHHTVEDVGIALGQALAEAVGDKRGIVRYGSCLLPMDDALVRAALDISGRPYLVWDVALPTAKIGTFDTELVREFFQALATHGGLTLHVTRLAGINSHHIAEAAFKSVARALRAALETDPRKANAIPSTKGSL.

This sequence belongs to the imidazoleglycerol-phosphate dehydratase family.

It is found in the cytoplasm. It carries out the reaction D-erythro-1-(imidazol-4-yl)glycerol 3-phosphate = 3-(imidazol-4-yl)-2-oxopropyl phosphate + H2O. The protein operates within amino-acid biosynthesis; L-histidine biosynthesis; L-histidine from 5-phospho-alpha-D-ribose 1-diphosphate: step 6/9. This chain is Imidazoleglycerol-phosphate dehydratase, found in Dinoroseobacter shibae (strain DSM 16493 / NCIMB 14021 / DFL 12).